A 318-amino-acid polypeptide reads, in one-letter code: NAD kinase (318 aa).

The active-site Proton acceptor is Asp84. NAD(+) contacts are provided by residues 84 to 85 (DG), Arg89, 159 to 160 (NE), Arg170, Asp189, and 200 to 205 (TAYAFS).

It belongs to the NAD kinase family. A divalent metal cation serves as cofactor.

It localises to the cytoplasm. The catalysed reaction is NAD(+) + ATP = ADP + NADP(+) + H(+). Its function is as follows. Involved in the regulation of the intracellular balance of NAD and NADP, and is a key enzyme in the biosynthesis of NADP. Catalyzes specifically the phosphorylation on 2'-hydroxyl of the adenosine moiety of NAD to yield NADP. This Cutibacterium acnes (strain DSM 16379 / KPA171202) (Propionibacterium acnes) protein is NAD kinase.